Reading from the N-terminus, the 1361-residue chain is DNA-directed RNA polymerase subunit beta (1361 aa).

Belongs to the RNA polymerase beta chain family. In terms of assembly, the RNAP catalytic core consists of 2 alpha, 1 beta, 1 beta' and 1 omega subunit. When a sigma factor is associated with the core the holoenzyme is formed, which can initiate transcription.

It carries out the reaction RNA(n) + a ribonucleoside 5'-triphosphate = RNA(n+1) + diphosphate. Its function is as follows. DNA-dependent RNA polymerase catalyzes the transcription of DNA into RNA using the four ribonucleoside triphosphates as substrates. The protein is DNA-directed RNA polymerase subunit beta of Dichelobacter nodosus (strain VCS1703A).